The primary structure comprises 697 residues: Polyribonucleotide nucleotidyltransferase (697 aa).

Residues aspartate 484 and aspartate 490 each coordinate Mg(2+). Positions 551–610 (PRITTIWVKTDKIRDVIGSGGKNIRGITEATGVSIDIEDSGRINIASTSKEACDKAIKMI) constitute a KH domain. The S1 motif domain maps to 620-688 (GKLYMGTVKK…KQGKIKLSRK (69 aa)).

It belongs to the polyribonucleotide nucleotidyltransferase family. Requires Mg(2+) as cofactor.

It is found in the cytoplasm. It catalyses the reaction RNA(n+1) + phosphate = RNA(n) + a ribonucleoside 5'-diphosphate. Functionally, involved in mRNA degradation. Catalyzes the phosphorolysis of single-stranded polyribonucleotides processively in the 3'- to 5'-direction. The chain is Polyribonucleotide nucleotidyltransferase from Geobacter sulfurreducens (strain ATCC 51573 / DSM 12127 / PCA).